The chain runs to 670 residues: Outer dynein arm-docking complex subunit 1 (670 aa).

Coiled-coil stretches lie at residues 9-155, 183-224, and 302-381; these read SKEV…RYLN, AVRE…EQLH, and NFIN…IQLL. The interval 454 to 473 is disordered; the sequence is KMAPLQPPDTLEDPPGFEAS. At Ser517 the chain carries Phosphoserine. Disordered regions lie at residues 526–596 and 616–670; these read AGSS…ASSG and VGSS…DSRG. A compositionally biased stretch (polar residues) spans 584–596; that stretch reads GHVTFGSTSASSG. The span at 650–670 shows a compositional bias: low complexity; it reads SSTGPASSTGPGSSTSKDSRG.

This sequence belongs to the ODA1/DCC2 family. In terms of assembly, component of the outer dynein arm-docking complex along with ODAD2, ODAD3, ODAD4 and CLXN. Interacts with ODAD3. Interacts with ODAD4; this interaction may facilitate the recruitment and/or attachment of outer dynein arm docking complex proteins, including ODAD1, ODAD3, and ODAD4 to ciliary axonemes. Interacts with DNAH9. Interacts with MNS1. Interacts with PIERCE1 and PIERCE2; the interactions link the outer dynein arms docking complex (ODA-DC) to the internal microtubule inner proteins (MIP) in cilium axoneme. In terms of tissue distribution, expressed in nasal epithelial cells. Highly expressed in testis and also detected in lung, brain and kidney.

It is found in the cytoplasm. It localises to the cytoskeleton. Its subcellular location is the cilium axoneme. Functionally, component of the outer dynein arm-docking complex (ODA-DC) that mediates outer dynein arms (ODA) binding onto the doublet microtubule. Involved in mediating assembly of both ODAs and their axonemal docking complex onto ciliary microtubules. The sequence is that of Outer dynein arm-docking complex subunit 1 from Homo sapiens (Human).